Here is a 230-residue protein sequence, read N- to C-terminus: Urease accessory protein UreE (230 aa).

Over residues 200–210 (HAIHSHGTGHT) the composition is skewed to basic residues. Residues 200–230 (HAIHSHGTGHTHSHDHDHSHSHGDHDHDHKH) form a disordered region. The span at 211-230 (HSHDHDHSHSHGDHDHDHKH) shows a compositional bias: basic and acidic residues.

Belongs to the UreE family.

It localises to the cytoplasm. Functionally, involved in urease metallocenter assembly. Binds nickel. Probably functions as a nickel donor during metallocenter assembly. This Yersinia enterocolitica serotype O:8 / biotype 1B (strain NCTC 13174 / 8081) protein is Urease accessory protein UreE.